A 44-amino-acid polypeptide reads, in one-letter code: Antimicrobial peptide 1b (44 aa).

The Chitin-binding type-1 domain occupies 1-42 (AQKCGEQGRGAKCPNCLCCGRYGFCGSTPDYCGVGCQSQCRG). Disulfide bonds link cysteine 4/cysteine 19, cysteine 13/cysteine 25, cysteine 16/cysteine 43, cysteine 18/cysteine 32, and cysteine 36/cysteine 40.

In terms of processing, contains 5 disulfide bonds.

Functionally, binds chitin. Has antifungal activity against F.oxysporum 16/10 (IC(50)=4.1 uM) and B.sorokiniana 6/10 (IC(50)=2.7 uM). Inhibits germination of fungal spores. This chain is Antimicrobial peptide 1b, found in Leymus arenarius (Lyme grass).